A 168-amino-acid chain; its full sequence is S-ribosylhomocysteine lyase (168 aa).

Fe cation-binding residues include His-54, His-58, and Cys-128.

This sequence belongs to the LuxS family. In terms of assembly, homodimer. Fe cation is required as a cofactor.

It carries out the reaction S-(5-deoxy-D-ribos-5-yl)-L-homocysteine = (S)-4,5-dihydroxypentane-2,3-dione + L-homocysteine. In terms of biological role, involved in the synthesis of autoinducer 2 (AI-2) which is secreted by bacteria and is used to communicate both the cell density and the metabolic potential of the environment. The regulation of gene expression in response to changes in cell density is called quorum sensing. Catalyzes the transformation of S-ribosylhomocysteine (RHC) to homocysteine (HC) and 4,5-dihydroxy-2,3-pentadione (DPD). The polypeptide is S-ribosylhomocysteine lyase (Mannheimia succiniciproducens (strain KCTC 0769BP / MBEL55E)).